We begin with the raw amino-acid sequence, 173 residues long: Mesencephalic astrocyte-derived neurotrophic factor homolog (173 aa).

A signal peptide spans 1-22 (MKTWYMVVVIGFLATLVQTSLA). 4 disulfides stabilise this stretch: Cys28/Cys114, Cys31/Cys103, Cys61/Cys72, and Cys148/Cys151.

This sequence belongs to the ARMET family.

The protein localises to the secreted. Its function is as follows. Required during the maturation of the embryonic nervous system for maintenance of neuronal and cuticular connectivity. Essential for maintenance of dopaminergic neurons and dopamine levels. In Drosophila yakuba (Fruit fly), this protein is Mesencephalic astrocyte-derived neurotrophic factor homolog.